Here is a 342-residue protein sequence, read N- to C-terminus: Galactose mutarotase (342 aa).

Phosphoserine is present on S14. Beta-D-galactose is bound by residues 81–82 (NR), H107, 176–178 (HSY), D243, Q279, and E307. The Proton donor role is filled by H176. E307 acts as the Proton acceptor in catalysis.

This sequence belongs to the aldose epimerase family. In terms of assembly, monomer.

Its subcellular location is the cytoplasm. The enzyme catalyses alpha-D-galactose = beta-D-galactose. It carries out the reaction alpha-D-glucose = beta-D-glucose. Its pathway is carbohydrate metabolism; hexose metabolism. It participates in carbohydrate metabolism; galactose metabolism. Its function is as follows. Mutarotase that catalyzes the interconversion of beta-D-galactose and alpha-D-galactose during galactose metabolism. Beta-D-galactose is metabolized in the liver into glucose 1-phosphate, the primary metabolic fuel, by the action of four enzymes that constitute the Leloir pathway: GALM, GALK1 (galactokinase), GALT (galactose-1-phosphate uridylyltransferase) and GALE (UDP-galactose-4'-epimerase). Involved in the maintenance of the equilibrium between the beta- and alpha-anomers of galactose, therefore ensuring a sufficient supply of the alpha-anomer for GALK1. Also active on D-glucose although shows a preference for galactose over glucose. This Mus musculus (Mouse) protein is Galactose mutarotase.